We begin with the raw amino-acid sequence, 234 residues long: Purine nucleoside phosphorylase DeoD-type (234 aa).

A purine D-ribonucleoside is bound at residue His4. Phosphate is bound by residues Gly20, Arg24, Arg43, and 87–90; that span reads RIGS. A purine D-ribonucleoside-binding positions include Glu162, 179 to 181, and 203 to 204; these read EME and SD. Asp204 serves as the catalytic Proton donor.

This sequence belongs to the PNP/UDP phosphorylase family. In terms of assembly, homohexamer; trimer of homodimers.

It carries out the reaction a purine D-ribonucleoside + phosphate = a purine nucleobase + alpha-D-ribose 1-phosphate. The catalysed reaction is a purine 2'-deoxy-D-ribonucleoside + phosphate = a purine nucleobase + 2-deoxy-alpha-D-ribose 1-phosphate. Catalyzes the reversible phosphorolytic breakdown of the N-glycosidic bond in the beta-(deoxy)ribonucleoside molecules, with the formation of the corresponding free purine bases and pentose-1-phosphate. The polypeptide is Purine nucleoside phosphorylase DeoD-type (Jannaschia sp. (strain CCS1)).